Here is a 299-residue protein sequence, read N- to C-terminus: Fluorinase (299 aa).

S-adenosyl-L-methionine-binding positions include Asp16, 21-23, Tyr77, Ser158, Asp210, Asn215, 269-270, and 277-279; these read DDS, SR, and RNA.

As to quaternary structure, homohexamer; dimers of trimer.

It catalyses the reaction fluoride + S-adenosyl-L-methionine = 5'-deoxy-5'-fluoroadenosine + L-methionine. Its activity is regulated as follows. Competitively inhibited by S-adenosyl-L-homocysteine (AdoHcy) and S-adenosyl-L-homocysteine (SAH). Sinefungin is only weakly inhibitory. In terms of biological role, involved in the biosynthesis of fluorometabolites. Catalyzes the formation of a C-F bond by combining S-adenosyl-L-methionine (SAM) and fluoride to generate 5'-fluoro-5'-deoxyadenosine (5'-FDA) and L-methionine. It can also use 2'-deoxyadenosine in place of adenosine as substrate. The protein is Fluorinase of Streptantibioticus cattleyicolor (Streptomyces cattleya).